The following is a 217-amino-acid chain: Claudin-9 (217 aa).

The Cytoplasmic segment spans residues 1-12; that stretch reads MASTGLELLGMT. A helical transmembrane segment spans residues 13–33; that stretch reads LAVLGWLGTLVSCALPLWKVT. Topologically, residues 34–81 are extracellular; the sequence is AFIGNSIVVAQVVWEGLWMSCVVQSTGQMQCKVYDSLLALPQDLQAAR. The helical transmembrane segment at 82-102 threads the bilayer; sequence ALCVVALLLALLGLLVAITGA. Topologically, residues 103–116 are cytoplasmic; the sequence is QCTTCVEDEGAKAR. Residues 117-137 form a helical membrane-spanning segment; that stretch reads IVLTAGVLLLLSGILVLIPVC. Topologically, residues 138–159 are extracellular; sequence WTAHAIIQDFYNPLVAEALKRE. The helical transmembrane segment at 160–180 threads the bilayer; sequence LGASLYLGWAAAALLMLGGGL. Residues 181-217 lie on the Cytoplasmic side of the membrane; that stretch reads LCCTCPPSHFERPRGPRLGYSIPSRSGASGLDKRDYV.

It belongs to the claudin family. As to quaternary structure, interacts with CLDN1, CD81 and OCLN.

It localises to the cell junction. Its subcellular location is the tight junction. It is found in the cell membrane. Functionally, plays a major role in tight junction-specific obliteration of the intercellular space, through calcium-independent cell-adhesion activity. This is Claudin-9 (Cldn9) from Mus musculus (Mouse).